Reading from the N-terminus, the 341-residue chain is Heme A synthase (341 aa).

5 helical membrane-spanning segments follow: residues 11-31 (AVST…IIGG), 101-121 (LIGL…HLSA), 127-147 (LFGL…MVAS), 160-180 (LATH…FSLE), and 194-214 (AGVT…GAFV). A heme-binding site is contributed by histidine 259. A run of 3 helical transmembrane segments spans residues 261 to 278 (WTGY…WQVW), 288 to 308 (FMVI…AALL), and 315 to 335 (LSLA…AAAW). Position 319 (histidine 319) interacts with heme.

This sequence belongs to the COX15/CtaA family. Type 2 subfamily. As to quaternary structure, interacts with CtaB. Heme b is required as a cofactor.

It is found in the cell membrane. It carries out the reaction Fe(II)-heme o + 2 A + H2O = Fe(II)-heme a + 2 AH2. The protein operates within porphyrin-containing compound metabolism; heme A biosynthesis; heme A from heme O: step 1/1. Functionally, catalyzes the conversion of heme O to heme A by two successive hydroxylations of the methyl group at C8. The first hydroxylation forms heme I, the second hydroxylation results in an unstable dihydroxymethyl group, which spontaneously dehydrates, resulting in the formyl group of heme A. This is Heme A synthase from Maricaulis maris (strain MCS10) (Caulobacter maris).